The primary structure comprises 169 residues: Protein-export protein SecB (169 aa).

It belongs to the SecB family. In terms of assembly, homotetramer, a dimer of dimers. One homotetramer interacts with 1 SecA dimer.

Its subcellular location is the cytoplasm. In terms of biological role, one of the proteins required for the normal export of preproteins out of the cell cytoplasm. It is a molecular chaperone that binds to a subset of precursor proteins, maintaining them in a translocation-competent state. It also specifically binds to its receptor SecA. The chain is Protein-export protein SecB from Alteromonas mediterranea (strain DSM 17117 / CIP 110805 / LMG 28347 / Deep ecotype).